The primary structure comprises 276 residues: ARL14 effector protein (276 aa).

Positions 158-177 are disordered; sequence KQTEFAPEGGKREKRKLTKA. K176 is covalently cross-linked (Glycyl lysine isopeptide (Lys-Gly) (interchain with G-Cter in SUMO2)). Phosphoserine occurs at positions 182 and 266.

Interacts with ARL14 and MYO1E.

It is found in the cytoplasm. In terms of biological role, through its interaction with ARL14 and MYO1E, may connect MHC class II-containing cytoplasmic vesicles to the actin network and hence controls the movement of these vesicles along the actin cytoskeleton in dendritic cells. The chain is ARL14 effector protein (Arl14ep) from Mus musculus (Mouse).